A 125-amino-acid polypeptide reads, in one-letter code: Late histone H2A.1 (125 aa).

The segment covering 1–18 has biased composition (basic residues); it reads MSGRGKGKAKGTKSKTRS. Residues 1–21 form a disordered region; sequence MSGRGKGKAKGTKSKTRSSRA. An N-acetylserine modification is found at Ser-2. Ser-2 is modified (phosphoserine). N5-methylglutamine is present on Gln-104. Residue Lys-119 forms a Glycyl lysine isopeptide (Lys-Gly) (interchain with G-Cter in ubiquitin) linkage.

It belongs to the histone H2A family. As to quaternary structure, the nucleosome is a histone octamer containing two molecules each of H2A, H2B, H3 and H4 assembled in one H3-H4 heterotetramer and two H2A-H2B heterodimers. The octamer wraps approximately 147 bp of DNA. In terms of processing, monoubiquitination of Lys-119 gives a specific tag for epigenetic transcriptional repression. Phosphorylation of Ser-2 directly represses transcription.

It is found in the nucleus. Its subcellular location is the chromosome. Core component of nucleosome. Nucleosomes wrap and compact DNA into chromatin, limiting DNA accessibility to the cellular machineries which require DNA as a template. Histones thereby play a central role in transcription regulation, DNA repair, DNA replication and chromosomal stability. DNA accessibility is regulated via a complex set of post-translational modifications of histones, also called histone code, and nucleosome remodeling. This is Late histone H2A.1 from Psammechinus miliaris (Green sea urchin).